We begin with the raw amino-acid sequence, 148 residues long: Ubiquitin-conjugating enzyme E2 5B (148 aa).

The 147-residue stretch at 1–147 folds into the UBC core domain; it reads MASKRILKEL…ARSWTQKYAM (147 aa). Catalysis depends on Cys85, which acts as the Glycyl thioester intermediate.

The protein belongs to the ubiquitin-conjugating enzyme family.

It catalyses the reaction S-ubiquitinyl-[E1 ubiquitin-activating enzyme]-L-cysteine + [E2 ubiquitin-conjugating enzyme]-L-cysteine = [E1 ubiquitin-activating enzyme]-L-cysteine + S-ubiquitinyl-[E2 ubiquitin-conjugating enzyme]-L-cysteine.. It participates in protein modification; protein ubiquitination. Its function is as follows. E2 conjugating enzyme that associates with the E3 ubiquitin-protein ligase EL5 to mediate ubiquitination of target proteins. This is Ubiquitin-conjugating enzyme E2 5B (UBC5B) from Oryza sativa subsp. japonica (Rice).